Consider the following 568-residue polypeptide: Sulfite reductase [NADPH] hemoprotein beta-component (568 aa).

[4Fe-4S] cluster-binding residues include cysteine 425, cysteine 431, cysteine 470, and cysteine 474. Cysteine 474 serves as a coordination point for siroheme.

This sequence belongs to the nitrite and sulfite reductase 4Fe-4S domain family. In terms of assembly, alpha(8)-beta(8). The alpha component is a flavoprotein, the beta component is a hemoprotein. It depends on siroheme as a cofactor. The cofactor is [4Fe-4S] cluster.

It carries out the reaction hydrogen sulfide + 3 NADP(+) + 3 H2O = sulfite + 3 NADPH + 4 H(+). The protein operates within sulfur metabolism; hydrogen sulfide biosynthesis; hydrogen sulfide from sulfite (NADPH route): step 1/1. Component of the sulfite reductase complex that catalyzes the 6-electron reduction of sulfite to sulfide. This is one of several activities required for the biosynthesis of L-cysteine from sulfate. This Xanthomonas euvesicatoria pv. vesicatoria (strain 85-10) (Xanthomonas campestris pv. vesicatoria) protein is Sulfite reductase [NADPH] hemoprotein beta-component.